A 533-amino-acid chain; its full sequence is Probable lipid II flippase MurJ (533 aa).

A run of 13 helical transmembrane segments spans residues E25–F45, V90–V110, L131–M151, F158–Y178, Y192–V212, L233–I253, I274–L294, F316–I336, T350–I370, Y389–A409, G412–L432, A449–W469, and G484–I504.

It belongs to the MurJ/MviN family.

Its subcellular location is the cell inner membrane. Its pathway is cell wall biogenesis; peptidoglycan biosynthesis. Its function is as follows. Involved in peptidoglycan biosynthesis. Transports lipid-linked peptidoglycan precursors from the inner to the outer leaflet of the cytoplasmic membrane. The chain is Probable lipid II flippase MurJ from Rhizobium tropici.